We begin with the raw amino-acid sequence, 493 residues long: Transmembrane protein 184 homolog DDB_G0284525 (493 aa).

The span at 1–10 (MTQESSSSNH) shows a compositional bias: polar residues. A disordered region spans residues 1–25 (MTQESSSSNHYVDESSFDNNNNNNN). Transmembrane regions (helical) follow at residues 46–66 (VPAL…ATIL), 87–107 (IVRI…SLLL), 119–139 (DCYE…YGGG), 180–200 (YVLV…FGLY), 212–232 (FYNA…VVLF), 254–274 (IVVF…NFGW), and 293–313 (FLIC…FPYE). N-linked (GlcNAc...) asparagine glycans are attached at residues Asn-415 and Asn-416.

The protein belongs to the TMEM184 family.

It is found in the cell membrane. In terms of biological role, probable transporter. In Dictyostelium discoideum (Social amoeba), this protein is Transmembrane protein 184 homolog DDB_G0284525 (tmem184A).